Consider the following 60-residue polypeptide: MSQKTVKVQLVRSLIGTREDHRATVRGLGLRRLNSVSELQDTPAVRGMINKVSYLVKVLA.

This sequence belongs to the universal ribosomal protein uL30 family. Part of the 50S ribosomal subunit.

This is Large ribosomal subunit protein uL30 from Cupriavidus metallidurans (strain ATCC 43123 / DSM 2839 / NBRC 102507 / CH34) (Ralstonia metallidurans).